A 1357-amino-acid chain; its full sequence is RNA2 polyprotein (1357 aa).

This sequence belongs to the nepoviruses RNA2 polyprotein family. In terms of processing, specific enzymatic cleavages in vivo by the P1 encoded 3C-like protease yield mature proteins.

The protein resides in the host cell junction. The protein localises to the host plasmodesma. Its subcellular location is the host cytoplasm. It localises to the host nucleus. It is found in the virion. Functionally, implicated in RNA2 replication. Could also be required for nematode transmission of the virus. Transports viral genome to neighboring plant cells directly through plasmosdesmata, without any budding. The movement protein allows efficient cell to cell propagation, by bypassing the host cell wall barrier. Acts by forming a tubular structure at the host plasmodesmata, enlarging it enough to allow free passage of virion capsids. The protein is RNA2 polyprotein of Beet ringspot virus (BRSV).